Consider the following 255-residue polypeptide: Imidazole glycerol phosphate synthase subunit HisF (255 aa).

Active-site residues include aspartate 11 and aspartate 130.

Belongs to the HisA/HisF family. Heterodimer of HisH and HisF.

Its subcellular location is the cytoplasm. It carries out the reaction 5-[(5-phospho-1-deoxy-D-ribulos-1-ylimino)methylamino]-1-(5-phospho-beta-D-ribosyl)imidazole-4-carboxamide + L-glutamine = D-erythro-1-(imidazol-4-yl)glycerol 3-phosphate + 5-amino-1-(5-phospho-beta-D-ribosyl)imidazole-4-carboxamide + L-glutamate + H(+). The protein operates within amino-acid biosynthesis; L-histidine biosynthesis; L-histidine from 5-phospho-alpha-D-ribose 1-diphosphate: step 5/9. Functionally, IGPS catalyzes the conversion of PRFAR and glutamine to IGP, AICAR and glutamate. The HisF subunit catalyzes the cyclization activity that produces IGP and AICAR from PRFAR using the ammonia provided by the HisH subunit. This chain is Imidazole glycerol phosphate synthase subunit HisF, found in Campylobacter jejuni (strain RM1221).